We begin with the raw amino-acid sequence, 440 residues long: Phosphoglucosamine mutase (440 aa).

Catalysis depends on S97, which acts as the Phosphoserine intermediate. Residues S97, D237, D239, and D241 each contribute to the Mg(2+) site. S97 carries the post-translational modification Phosphoserine.

It belongs to the phosphohexose mutase family. It depends on Mg(2+) as a cofactor. Activated by phosphorylation.

It catalyses the reaction alpha-D-glucosamine 1-phosphate = D-glucosamine 6-phosphate. Functionally, catalyzes the conversion of glucosamine-6-phosphate to glucosamine-1-phosphate. The sequence is that of Phosphoglucosamine mutase from Nautilia profundicola (strain ATCC BAA-1463 / DSM 18972 / AmH).